The sequence spans 306 residues: Small ribosomal subunit protein uS2 (306 aa).

Ser-2 is modified (N-acetylserine). Laminin-binding regions lie at residues Ile-161–Arg-180 and Arg-205–Gly-229. [DE]-W-[ST] repeat units lie at residues Glu-230–Thr-232, Asp-245–Ser-247, Asp-276–Ser-278, Asp-286–Ser-288, and Glu-304–Ser-306. The laminin-binding stretch occupies residues Glu-242–Ser-306. Residues Ser-247–Ser-306 are disordered. Over residues Asp-276 to Ser-306 the composition is skewed to polar residues.

Belongs to the universal ribosomal protein uS2 family. As to quaternary structure, monomer (37LRP) and homodimer (67LR). Component of the small ribosomal subunit. Mature ribosomes consist of a small (40S) and a large (60S) subunit. The 40S subunit contains about 33 different proteins and 1 molecule of RNA (18S). The 60S subunit contains about 49 different proteins and 3 molecules of RNA (28S, 5.8S and 5S). Interacts with rps21. Interacts with several laminins including at least lamb1. Interacts with mdk. Post-translationally, acylated. Acylation may be a prerequisite for conversion of the monomeric 37 kDa laminin receptor precursor (37LRP) to the mature dimeric 67 kDa laminin receptor (67LR), and may provide a mechanism for membrane association. In terms of processing, cleaved by stromelysin-3 (ST3) at the cell surface. Cleavage by stromelysin-3 may be a mechanism to alter cell-extracellular matrix interactions.

Its subcellular location is the cell membrane. The protein localises to the cytoplasm. The protein resides in the nucleus. Functionally, required for the assembly and/or stability of the 40S ribosomal subunit. Required for the processing of the 20S rRNA-precursor to mature 18S rRNA in a late step of the maturation of 40S ribosomal subunits. Also functions as a cell surface receptor for laminin. Plays a role in cell adhesion to the basement membrane and in the consequent activation of signaling transduction pathways. May play a role in cell fate determination and tissue morphogenesis. The chain is Small ribosomal subunit protein uS2 (rpsa) from Xenopus laevis (African clawed frog).